The chain runs to 306 residues: MSEVLPAGLATTVLVPASSANLGPGFDSLGIALSLYDEIEVNTTESGLKVAVEGQGAGEVPLDGSHLVVRAIERGLAAGGAAAPGLIVQCHNKIPHSRGLGSSAAAAVAGLGVANGLLAKAGRAVLSDDVLVQLASEFEGHPDNAAASVLGGAVVSWSETSGATPIYAATRLDVHPDIKIVAAIPEEQSSTAHTRVLLPQAVTHVDARFNISRVALLTVALTARPDLLMTATEDRLHQPQRASAMPASADVLAYLRSQGVAAVLSGAGPAVLALTTVDLPDSAVKYAEDQGFSLVAMAVSAGVSVR.

95 to 105 (PHSRGLGSSAA) is a binding site for ATP.

Belongs to the GHMP kinase family. Homoserine kinase subfamily.

The protein resides in the cytoplasm. The enzyme catalyses L-homoserine + ATP = O-phospho-L-homoserine + ADP + H(+). The protein operates within amino-acid biosynthesis; L-threonine biosynthesis; L-threonine from L-aspartate: step 4/5. In terms of biological role, catalyzes the ATP-dependent phosphorylation of L-homoserine to L-homoserine phosphate. This is Homoserine kinase from Mycobacteroides abscessus (strain ATCC 19977 / DSM 44196 / CCUG 20993 / CIP 104536 / JCM 13569 / NCTC 13031 / TMC 1543 / L948) (Mycobacterium abscessus).